We begin with the raw amino-acid sequence, 198 residues long: Recombination protein RecR (198 aa).

A C4-type zinc finger spans residues 57–72 (CRVCANIADENPCGIC). Residues 80-175 (GLICVVERPR…RVTRLAFGLP (96 aa)) enclose the Toprim domain.

Belongs to the RecR family.

Its function is as follows. May play a role in DNA repair. It seems to be involved in an RecBC-independent recombinational process of DNA repair. It may act with RecF and RecO. The chain is Recombination protein RecR from Desulforudis audaxviator (strain MP104C).